The primary structure comprises 410 residues: MNKQSWLLNLSLLKTHPAFRAVFLARFISIVSLGLLGVAVPVQIQMMTHSTWQVGLSVTLTGGAMFVGLMVGGVLADRYERKKVILLARGTCGIGFIGLCLNALLPEPSLLAIYLLGLWDGFFASLGVTALLAATSALVGRENLMQAGAITMLTVRLGSVISPMIGGLLLATGGVAWNYGLAAAGTFITLLPLLSLPELPPPPQPLEHPLKSLLAGFRFLLASPLLGGLLTMASAVLVLYPALADNWQMSAAQIGFLYAAIPLGAAIGALTSGKLAHSARPGLLMLLSTLGSFLAIGLFGLMPMWILGVVCLALFGWLSAVSSLLQYTMLQTQTPEAMLGRINGLWTAQNVTGDAIGAALLGGLGAMMTPVASASASGFGLLIIGVLLLLVLVELRRFRQTPPQVTASDS.

Residues 1–21 (MNKQSWLLNLSLLKTHPAFRA) are Cytoplasmic-facing. The chain crosses the membrane as a helical span at residues 22-42 (VFLARFISIVSLGLLGVAVPV). Residues 43-55 (QIQMMTHSTWQVG) are Periplasmic-facing. Residues 56-76 (LSVTLTGGAMFVGLMVGGVLA) traverse the membrane as a helical segment. Topologically, residues 77 to 83 (DRYERKK) are cytoplasmic. A helical membrane pass occupies residues 84 to 104 (VILLARGTCGIGFIGLCLNAL). Residues 105-109 (LPEPS) lie on the Periplasmic side of the membrane. Residues 110-130 (LLAIYLLGLWDGFFASLGVTA) form a helical membrane-spanning segment. Topologically, residues 131–156 (LLAATSALVGRENLMQAGAITMLTVR) are cytoplasmic. The chain crosses the membrane as a helical span at residues 157–177 (LGSVISPMIGGLLLATGGVAW). Asn-178 is a topological domain (periplasmic). Residues 179–199 (YGLAAAGTFITLLPLLSLPEL) traverse the membrane as a helical segment. Topologically, residues 200 to 218 (PPPPQPLEHPLKSLLAGFR) are cytoplasmic. A helical transmembrane segment spans residues 219 to 233 (FLLASPLLGGLLTMA). The Periplasmic portion of the chain corresponds to 234–250 (SAVLVLYPALADNWQMS). The helical transmembrane segment at 251–271 (AAQIGFLYAAIPLGAAIGALT) threads the bilayer. The Cytoplasmic segment spans residues 272-281 (SGKLAHSARP). Residues 282–301 (GLLMLLSTLGSFLAIGLFGL) traverse the membrane as a helical segment. At 302-307 (MPMWIL) the chain is on the periplasmic side. The helical transmembrane segment at 308-330 (GVVCLALFGWLSAVSSLLQYTML) threads the bilayer. Over 331–350 (QTQTPEAMLGRINGLWTAQN) the chain is Cytoplasmic. A helical membrane pass occupies residues 351-371 (VTGDAIGAALLGGLGAMMTPV). Ala-372 is a topological domain (periplasmic). A helical membrane pass occupies residues 373-393 (SASASGFGLLIIGVLLLLVLV). At 394-410 (ELRRFRQTPPQVTASDS) the chain is on the cytoplasmic side.

The protein belongs to the major facilitator superfamily. EntS (TC 2.A.1.38) family.

The protein localises to the cell inner membrane. Functionally, component of an export pathway for enterobactin. The polypeptide is Enterobactin exporter EntS (Shigella flexneri).